The chain runs to 187 residues: Large ribosomal subunit protein bL9 (187 aa).

A disordered region spans residues 168-187; it reads EEAPAEEDVAAEETSEAAEA.

Belongs to the bacterial ribosomal protein bL9 family.

Functionally, binds to the 23S rRNA. The polypeptide is Large ribosomal subunit protein bL9 (Paramagnetospirillum magneticum (strain ATCC 700264 / AMB-1) (Magnetospirillum magneticum)).